Here is a 125-residue protein sequence, read N- to C-terminus: Small ribosomal subunit protein uS12 (125 aa).

The interval 1–23 (MATVNQLVRKGRTKRTAKSSVPA) is disordered. Position 89 is a 3-methylthioaspartic acid (aspartate 89). Positions 102-125 (ADTAGVDKRRQGRSKYGAKRPKKK) are disordered. Residues 111-125 (RQGRSKYGAKRPKKK) are compositionally biased toward basic residues.

This sequence belongs to the universal ribosomal protein uS12 family. Part of the 30S ribosomal subunit. Contacts proteins S8 and S17. May interact with IF1 in the 30S initiation complex.

In terms of biological role, with S4 and S5 plays an important role in translational accuracy. Its function is as follows. Interacts with and stabilizes bases of the 16S rRNA that are involved in tRNA selection in the A site and with the mRNA backbone. Located at the interface of the 30S and 50S subunits, it traverses the body of the 30S subunit contacting proteins on the other side and probably holding the rRNA structure together. The combined cluster of proteins S8, S12 and S17 appears to hold together the shoulder and platform of the 30S subunit. The sequence is that of Small ribosomal subunit protein uS12 from Halorhodospira halophila (strain DSM 244 / SL1) (Ectothiorhodospira halophila (strain DSM 244 / SL1)).